Reading from the N-terminus, the 495-residue chain is N-succinylglutamate 5-semialdehyde dehydrogenase (495 aa).

228–233 (GSYATG) lines the NAD(+) pocket. Catalysis depends on residues Glu-251 and Cys-285.

It belongs to the aldehyde dehydrogenase family. AstD subfamily.

The catalysed reaction is N-succinyl-L-glutamate 5-semialdehyde + NAD(+) + H2O = N-succinyl-L-glutamate + NADH + 2 H(+). The protein operates within amino-acid degradation; L-arginine degradation via AST pathway; L-glutamate and succinate from L-arginine: step 4/5. Functionally, catalyzes the NAD-dependent reduction of succinylglutamate semialdehyde into succinylglutamate. The protein is N-succinylglutamate 5-semialdehyde dehydrogenase of Legionella pneumophila (strain Paris).